A 429-amino-acid chain; its full sequence is Serine hydroxymethyltransferase (429 aa).

(6S)-5,6,7,8-tetrahydrofolate-binding positions include leucine 126 and glycine 130–leucine 132. At lysine 235 the chain carries N6-(pyridoxal phosphate)lysine. Serine 359–phenylalanine 361 serves as a coordination point for (6S)-5,6,7,8-tetrahydrofolate.

This sequence belongs to the SHMT family. In terms of assembly, homodimer. It depends on pyridoxal 5'-phosphate as a cofactor.

Its subcellular location is the cytoplasm. The catalysed reaction is (6R)-5,10-methylene-5,6,7,8-tetrahydrofolate + glycine + H2O = (6S)-5,6,7,8-tetrahydrofolate + L-serine. It functions in the pathway one-carbon metabolism; tetrahydrofolate interconversion. It participates in amino-acid biosynthesis; glycine biosynthesis; glycine from L-serine: step 1/1. Catalyzes the reversible interconversion of serine and glycine with tetrahydrofolate (THF) serving as the one-carbon carrier. This reaction serves as the major source of one-carbon groups required for the biosynthesis of purines, thymidylate, methionine, and other important biomolecules. Also exhibits THF-independent aldolase activity toward beta-hydroxyamino acids, producing glycine and aldehydes, via a retro-aldol mechanism. The chain is Serine hydroxymethyltransferase from Synechococcus sp. (strain WH7803).